We begin with the raw amino-acid sequence, 80 residues long: Conotoxin PnMKLT1-0121 (80 aa).

An N-terminal signal peptide occupies residues 1–22 (MKLTCMMIVAVLFLTAWTFATA). Positions 23 to 49 (DDPRNRLENFFSKTQHEMKNPEASKLN) are excised as a propeptide. 3 disulfide bridges follow: Cys-52-Cys-67, Cys-59-Cys-71, and Cys-66-Cys-75.

It belongs to the conotoxin O1 superfamily. In terms of tissue distribution, expressed by the venom duct.

It is found in the secreted. The sequence is that of Conotoxin PnMKLT1-0121 from Conus pennaceus (Feathered cone).